Reading from the N-terminus, the 614-residue chain is GPI transamidase component GAA1 (614 aa).

At 1–19 (MALLEKLHRRIVDMGLVPR) the chain is on the cytoplasmic side. Residues 20 to 40 (IIALLPVISMLCALFGFISIA) traverse the membrane as a helical segment. The Lumenal segment spans residues 41–356 (ILPMDGQYRR…APRQFVSISS (316 aa)). The N-linked (GlcNAc...) asparagine glycan is linked to asparagine 87. The helical transmembrane segment at 357–377 (YLPSAVALSIAFAISSLNAFI) threads the bilayer. Over 378–394 (NNAYANISLFSEYNLVA) the chain is Cytoplasmic. A helical transmembrane segment spans residues 395-415 (LLVWFVSLVISFVVSQAFLLI). Residues 416–464 (PSSGLLMTISMASCFLPLILSRKIHISEPLSYRLKNVAFLYFSLVSTSL) are Lumenal-facing. Residues 465–485 (LMINFAMALLIGTLAFPMTFV) form a helical membrane-spanning segment. The Cytoplasmic segment spans residues 486–535 (KTIVESSSEHEVTTQSSNPIKTEPKDEIELVENHMDTTPATPQQQKQKLK). The helical transmembrane segment at 536–556 (NLVLLILTNPFISITLFGLFF) threads the bilayer. Over 557-577 (DDEFHGFDIINKLVSAWLDLK) the chain is Lumenal. Residues 578 to 598 (CWSWFVLCIGWLPCWLLILAS) form a helical membrane-spanning segment. At 599-614 (SFESKSVVVRSKEKQS) the chain is on the cytoplasmic side. A Prevents secretion from ER motif is present at residues 610–614 (KEKQS).

As to quaternary structure, forms a complex with CDC91, GPI17, GPI16 and GPI8.

Its subcellular location is the endoplasmic reticulum membrane. The protein operates within glycolipid biosynthesis; glycosylphosphatidylinositol-anchor biosynthesis. In terms of biological role, component of the GPI transamidase complex. Required for a terminal step of GPI anchor attachment onto proteins. Affects endocytosis. The chain is GPI transamidase component GAA1 (GAA1) from Saccharomyces cerevisiae (strain ATCC 204508 / S288c) (Baker's yeast).